Reading from the N-terminus, the 299-residue chain is Tyrosine recombinase XerC (299 aa).

Positions 1 to 86 (MRNELLDFLE…AIRSLFKFLT (86 aa)) constitute a Core-binding (CB) domain. A Tyr recombinase domain is found at 107 to 293 (KLPEFLSIEE…NQARMTEVYN (187 aa)). Residues Arg-146, Lys-170, His-245, Arg-248, and His-271 contribute to the active site. Tyr-280 acts as the O-(3'-phospho-DNA)-tyrosine intermediate in catalysis.

Belongs to the 'phage' integrase family. XerC subfamily. Forms a cyclic heterotetrameric complex composed of two molecules of XerC and two molecules of XerD.

It is found in the cytoplasm. Its function is as follows. Site-specific tyrosine recombinase, which acts by catalyzing the cutting and rejoining of the recombining DNA molecules. The XerC-XerD complex is essential to convert dimers of the bacterial chromosome into monomers to permit their segregation at cell division. It also contributes to the segregational stability of plasmids. The protein is Tyrosine recombinase XerC of Natranaerobius thermophilus (strain ATCC BAA-1301 / DSM 18059 / JW/NM-WN-LF).